A 482-amino-acid chain; its full sequence is Bile acid receptor (482 aa).

A Glycyl lysine isopeptide (Lys-Gly) (interchain with G-Cter in SUMO1) cross-link involves residue lysine 132. The nuclear receptor DNA-binding region spans 134-209 (DELCVVCGDR…MGMLAECLLT (76 aa)). The segment at 137-157 (CVVCGDRASGYHYNALTCEGC) adopts an NR C4-type zinc-finger fold. Serine 145 and serine 164 each carry phosphoserine; by PKC/PRKCA. Position 167 is an N6-acetyllysine; by EP300 (lysine 167). The NR C4-type zinc-finger motif lies at 173-197 (CKNGGNCVMDMYMRRKCQECRLRKC). Lysine 216 is modified (N6-methyllysine; by SETD7). At lysine 223 the chain carries N6-acetyllysine; by EP300. Over residues 229-240 (AIHEDSEGRDLR) the composition is skewed to basic and acidic residues. The disordered stretch occupies residues 229–253 (AIHEDSEGRDLRQVTSTTKSCREKT). The NR LBD domain maps to 258-482 (DQQNLLHYIM…PLLCEIWDVQ (225 aa)). A Glycyl lysine isopeptide (Lys-Gly) (interchain with G-Cter in SUMO1) cross-link involves residue lysine 285. Arginine 341, tyrosine 371, and tyrosine 379 together coordinate chenodeoxycholate. Threonine 452 carries the post-translational modification Phosphothreonine; by PKC/PRKCZ. Histidine 457 contributes to the chenodeoxycholate binding site.

This sequence belongs to the nuclear hormone receptor family. NR1 subfamily. As to quaternary structure, heterodimer with RXRA; the heterodimerization enhances the binding affinity for LXXLL motifs from coactivators. Binds DNA predominantly as a heterodimer with RXRA. After activation by agonist binding interacts with coactivators. Interacts with NCOA1, NCOA2, PPARGC1A, CARM1, SETD7, PRMT1, GPS2, SMARCA4 and MED1, EP300 and SMARCD1. Interacts with XRCC5 and XRCC6; decreasing NR1H4/FXR transactivation activity towards ABCB11/BSEP. Interacts with PAGR1 AND NCOA6; indicative for an association with an MLL2/MLL3 complex (ASCOM). In terms of processing, acetylated by EP300. Lys-223 as is the major acetylation site for EP300; the dynamicly regulated acetylation inhibits heterodimerization with RXRA and transactivation activity. Deacetylated by SIRT1. Post-translationally, methylation may increase transactivation of target genes. Phosphorylation by PKC/PRKCA increases transactivation activity by promoting association with PPARGC1A. In terms of processing, sumoylated upon ligand binding.

The protein resides in the nucleus. Ligand-activated transcription factor. Receptor for bile acids (BAs) such as chenodeoxycholic acid (CDCA), lithocholic acid, deoxycholic acid (DCA) and allocholic acid (ACA). Plays a essential role in BA homeostasis through the regulation of genes involved in BA synthesis, conjugation and enterohepatic circulation. Also regulates lipid and glucose homeostasis and is involved innate immune response. The FXR-RXR heterodimer binds predominantly to farnesoid X receptor response elements (FXREs) containing two inverted repeats of the consensus sequence 5'-AGGTCA-3' in which the monomers are spaced by 1 nucleotide (IR-1) but also to tandem repeat DR1 sites with lower affinity, and can be activated by either FXR or RXR-specific ligands. It is proposed that monomeric nuclear receptors such as NR5A2/LRH-1 bound to coregulatory nuclear responsive element (NRE) halfsites located in close proximity to FXREs modulate transcriptional activity. In the liver activates transcription of the corepressor NR0B2 thereby indirectly inhibiting CYP7A1 and CYP8B1 (involved in BA synthesis) implicating at least in part histone demethylase KDM1A resulting in epigenomic repression, and SLC10A1/NTCP (involved in hepatic uptake of conjugated BAs). Activates transcription of the repressor MAFG (involved in regulation of BA synthesis). Activates transcription of SLC27A5/BACS and BAAT (involved in BA conjugation), ABCB11/BSEP (involved in bile salt export) by directly recruiting histone methyltransferase CARM1, and ABCC2/MRP2 (involved in secretion of conjugated BAs) and ABCB4 (involved in secretion of phosphatidylcholine in the small intestine). Activates transcription of SLC27A5/BACS and BAAT (involved in BA conjugation), ABCB11/BSEP (involved in bile salt export) by directly recruiting histone methyltransferase CARM1, and ABCC2/MRP2 (involved in secretion of conjugated BAs) and ABCB4 (involved in secretion of phosphatidylcholine in the small intestine). In the intestine activates FGF19 expression and secretion leading to hepatic CYP7A1 repression. The function also involves the coordinated induction of hepatic KLB/beta-klotho expression. Regulates transcription of liver UGT2B4 and SULT2A1 involved in BA detoxification; binding to the UGT2B4 promoter seems to imply a monomeric transactivation independent of RXRA. Modulates lipid homeostasis by activating liver NR0B2/SHP-mediated repression of SREBF1 (involved in de novo lipogenesis), expression of PLTP (involved in HDL formation), SCARB1 (involved in HDL hepatic uptake), APOE, APOC1, APOC4, PPARA (involved in beta-oxidation of fatty acids), VLDLR and SDC1 (involved in the hepatic uptake of LDL and IDL remnants), and inhibiting expression of MTTP (involved in VLDL assembly). Increases expression of APOC2 (promoting lipoprotein lipase activity implicated in triglyceride clearance). Transrepresses APOA1 involving a monomeric competition with NR2A1 for binding to a DR1 element. Also reduces triglyceride clearance by inhibiting expression of ANGPTL3 and APOC3 (both involved in inhibition of lipoprotein lipase). Involved in glucose homeostasis by modulating hepatic gluconeogenesis through activation of NR0B2/SHP-mediated repression of respective genes. Modulates glycogen synthesis (inducing phosphorylation of glycogen synthase kinase-3). Modulates glucose-stimulated insulin secretion and is involved in insulin resistance. Involved in intestinal innate immunity. Plays a role in protecting the distal small intestine against bacterial overgrowth and preservation of the epithelial barrier. Down-regulates inflammatory cytokine expression in several types of immune cells including macrophages and mononuclear cells. Mediates trans-repression of TLR4-induced cytokine expression; the function seems to require its sumoylation and prevents N-CoR nuclear receptor corepressor clearance from target genes such as IL1B and NOS2. Involved in the TLR9-mediated protective mechanism in intestinal inflammation. Plays an anti-inflammatory role in liver inflammation; proposed to inhibit pro-inflammatory (but not antiapoptotic) NF-kappa-B signaling. The chain is Bile acid receptor (NR1H4) from Bos taurus (Bovine).